The primary structure comprises 189 residues: dCTP deaminase (189 aa).

DCTP-binding positions include 112-117 (KSTYAR), 136-138 (TLE), Gln157, Tyr171, and Gln181. The Proton donor/acceptor role is filled by Glu138.

It belongs to the dCTP deaminase family. Homotrimer.

It carries out the reaction dCTP + H2O + H(+) = dUTP + NH4(+). Its pathway is pyrimidine metabolism; dUMP biosynthesis; dUMP from dCTP (dUTP route): step 1/2. Functionally, catalyzes the deamination of dCTP to dUTP. The protein is dCTP deaminase of Nitrosospira multiformis (strain ATCC 25196 / NCIMB 11849 / C 71).